A 200-amino-acid polypeptide reads, in one-letter code: Recombination protein RecR (200 aa).

The C4-type zinc-finger motif lies at 57 to 72 (CQECRTFTEQDVCHIC). The Toprim domain maps to 81–176 (GQLCVVESPA…TASRIAHGVP (96 aa)).

The protein belongs to the RecR family.

Its function is as follows. May play a role in DNA repair. It seems to be involved in an RecBC-independent recombinational process of DNA repair. It may act with RecF and RecO. The protein is Recombination protein RecR of Vibrio cholerae serotype O1 (strain ATCC 39541 / Classical Ogawa 395 / O395).